The chain runs to 292 residues: Protein/nucleic acid deglycase HchA (292 aa).

The span at 1 to 12 (MSQDVNELSKQP) shows a compositional bias: polar residues. The interval 1–23 (MSQDVNELSKQPTPDKAEDNAFF) is disordered. Catalysis depends on Cys-190, which acts as the Nucleophile.

This sequence belongs to the peptidase C56 family. HchA subfamily.

The protein resides in the cytoplasm. The enzyme catalyses N(omega)-(1-hydroxy-2-oxopropyl)-L-arginyl-[protein] + H2O = lactate + L-arginyl-[protein] + H(+). The catalysed reaction is N(6)-(1-hydroxy-2-oxopropyl)-L-lysyl-[protein] + H2O = lactate + L-lysyl-[protein] + H(+). It carries out the reaction S-(1-hydroxy-2-oxopropyl)-L-cysteinyl-[protein] + H2O = lactate + L-cysteinyl-[protein] + H(+). It catalyses the reaction N(omega)-(1-hydroxy-2-oxoethyl)-L-arginyl-[protein] + H2O = L-arginyl-[protein] + glycolate + H(+). The enzyme catalyses N(6)-(1-hydroxy-2-oxoethyl)-L-lysyl-[protein] + H2O = glycolate + L-lysyl-[protein] + H(+). The catalysed reaction is S-(1-hydroxy-2-oxoethyl)-L-cysteinyl-[protein] + H2O = glycolate + L-cysteinyl-[protein] + H(+). It carries out the reaction N(2)-(1-hydroxy-2-oxopropyl)-dGTP + H2O = lactate + dGTP + H(+). It catalyses the reaction N(2)-(1-hydroxy-2-oxopropyl)-GTP + H2O = lactate + GTP + H(+). The enzyme catalyses N(2)-(1-hydroxy-2-oxopropyl)-GDP + H2O = lactate + GDP + H(+). The catalysed reaction is N(2)-(1-hydroxy-2-oxopropyl)-GMP + H2O = lactate + GMP + H(+). It carries out the reaction N(2)-(1-hydroxy-2-oxoethyl)-dGTP + H2O = dGTP + glycolate + H(+). It catalyses the reaction N(2)-(1-hydroxy-2-oxoethyl)-GTP + H2O = glycolate + GTP + H(+). The enzyme catalyses N(2)-(1-hydroxy-2-oxoethyl)-GDP + H2O = glycolate + GDP + H(+). The catalysed reaction is N(2)-(1-hydroxy-2-oxoethyl)-GMP + H2O = glycolate + GMP + H(+). It carries out the reaction an N(2)-(1-hydroxy-2-oxopropyl)-guanosine in RNA + H2O = a guanosine in RNA + lactate + H(+). It catalyses the reaction an N(2)-(1-hydroxy-2-oxopropyl)-2'-deoxyguanosine in DNA + H2O = a 2'-deoxyguanosine in DNA + lactate + H(+). The enzyme catalyses an N(2)-(1-hydroxy-2-oxoethyl)-guanosine in RNA + H2O = a guanosine in RNA + glycolate + H(+). The catalysed reaction is an N(2)-(1-hydroxy-2-oxoethyl)-2'-deoxyguanosine in DNA + H2O = a 2'-deoxyguanosine in DNA + glycolate + H(+). In terms of biological role, protein and nucleotide deglycase that catalyzes the deglycation of the Maillard adducts formed between amino groups of proteins or nucleotides and reactive carbonyl groups of glyoxals. Thus, functions as a protein deglycase that repairs methylglyoxal- and glyoxal-glycated proteins, and releases repaired proteins and lactate or glycolate, respectively. Deglycates cysteine, arginine and lysine residues in proteins, and thus reactivates these proteins by reversing glycation by glyoxals. Acts on early glycation intermediates (hemithioacetals and aminocarbinols), preventing the formation of Schiff bases and advanced glycation endproducts (AGE). Also functions as a nucleotide deglycase able to repair glycated guanine in the free nucleotide pool (GTP, GDP, GMP, dGTP) and in DNA and RNA. Is thus involved in a major nucleotide repair system named guanine glycation repair (GG repair), dedicated to reversing methylglyoxal and glyoxal damage via nucleotide sanitization and direct nucleic acid repair. Plays an important role in protecting cells from carbonyl stress. In Staphylococcus aureus (strain Mu3 / ATCC 700698), this protein is Protein/nucleic acid deglycase HchA.